Reading from the N-terminus, the 113-residue chain is U11-theraphotoxin-Hhn1u (113 aa).

Residues 1–21 form the signal peptide; that stretch reads MNTVRVTFLLVFVLAVSLGQA. Positions 22–74 are excised as a propeptide; sequence DKDENRMEMQEKTEQGKSYLDFAENLLLQKLEELEAKLLEEDSEESRNSRQKR. Cystine bridges form between C75-C90, C82-C95, and C89-C110.

The protein belongs to the neurotoxin 14 (magi-1) family. 01 (HNTX-16) subfamily. Expressed by the venom gland.

The protein localises to the secreted. Its function is as follows. Probable ion channel inhibitor. The sequence is that of U11-theraphotoxin-Hhn1u from Cyriopagopus hainanus (Chinese bird spider).